A 149-amino-acid polypeptide reads, in one-letter code: Ribonuclease pancreatic (149 aa).

The signal sequence occupies residues methionine 1–glycine 25. Positions 32 and 35 each coordinate substrate. Histidine 37 serves as the catalytic Proton acceptor. 4 disulfide bridges follow: cysteine 51/cysteine 109, cysteine 65/cysteine 120, cysteine 83/cysteine 135, and cysteine 90/cysteine 97. Lysine 66–threonine 70 lines the substrate pocket. Asparagine 87 carries N-linked (GlcNAc...) asparagine glycosylation. Substrate is bound by residues lysine 91 and arginine 110. The Proton donor role is filled by histidine 144.

The protein belongs to the pancreatic ribonuclease family. In terms of assembly, monomer. Interacts with and forms tight 1:1 complexes with RNH1. Dimerization of two such complexes may occur. Interaction with RNH1 inhibits this protein. In terms of tissue distribution, pancreas.

It is found in the secreted. It catalyses the reaction an [RNA] containing cytidine + H2O = an [RNA]-3'-cytidine-3'-phosphate + a 5'-hydroxy-ribonucleotide-3'-[RNA].. The catalysed reaction is an [RNA] containing uridine + H2O = an [RNA]-3'-uridine-3'-phosphate + a 5'-hydroxy-ribonucleotide-3'-[RNA].. Functionally, endonuclease that catalyzes the cleavage of RNA on the 3' side of pyrimidine nucleotides. Acts on single-stranded and double-stranded RNA. The polypeptide is Ribonuclease pancreatic (RNASE1) (Acomys cahirinus (Cairo spiny mouse)).